Reading from the N-terminus, the 332-residue chain is Biotin synthase (332 aa).

In terms of domain architecture, Radical SAM core spans 53–282 (YFGKKVKLNM…TKEIRISGGR (230 aa)). Cys71, Cys75, and Cys78 together coordinate [4Fe-4S] cluster. 4 residues coordinate [2Fe-2S] cluster: Cys115, Cys147, Cys207, and Arg277.

The protein belongs to the radical SAM superfamily. Biotin synthase family. In terms of assembly, homodimer. The cofactor is [4Fe-4S] cluster. [2Fe-2S] cluster is required as a cofactor.

The catalysed reaction is (4R,5S)-dethiobiotin + (sulfur carrier)-SH + 2 reduced [2Fe-2S]-[ferredoxin] + 2 S-adenosyl-L-methionine = (sulfur carrier)-H + biotin + 2 5'-deoxyadenosine + 2 L-methionine + 2 oxidized [2Fe-2S]-[ferredoxin]. Its pathway is cofactor biosynthesis; biotin biosynthesis; biotin from 7,8-diaminononanoate: step 2/2. In terms of biological role, catalyzes the conversion of dethiobiotin (DTB) to biotin by the insertion of a sulfur atom into dethiobiotin via a radical-based mechanism. The sequence is that of Biotin synthase from Bacillus thuringiensis (strain Al Hakam).